The sequence spans 400 residues: Inositol polyphosphate 1-phosphatase (400 aa).

Position 54 (Asp54) interacts with Li(+). Glu79 contributes to the Mg(2+) binding site. Residue Glu80 coordinates Li(+). Positions 153 and 155 each coordinate Mg(2+). Asp156, Ser157, and Thr158 together coordinate 1D-myo-inositol 1,4-bisphosphate. Residues 238-257 (STRSNSEAQSQGTQNPSSEG) show a composition bias toward polar residues. Residues 238 to 258 (STRSNSEAQSQGTQNPSSEGS) are disordered. Ser268, Lys270, Gly290, Ala291, Lys294, and Thr312 together coordinate 1D-myo-inositol 1,4-bisphosphate. Position 317 (Asp317) interacts with Mg(2+). Ser318 is modified (phosphoserine).

This sequence belongs to the inositol monophosphatase superfamily. Monomer. The cofactor is Mg(2+).

It carries out the reaction 1D-myo-inositol 1,4-bisphosphate + H2O = 1D-myo-inositol 4-phosphate + phosphate. It catalyses the reaction 1D-myo-inositol 1,3,4-trisphosphate + H2O = 1D-myo-inositol 3,4-bisphosphate + phosphate. It functions in the pathway signal transduction; phosphatidylinositol signaling pathway. Inhibited by Li(+). Its function is as follows. Mg(2+)-dependent phosphatase that catalyzes the hydrolysis of the 1-position phosphate from inositol 1,4-bisphosphate and inositol 1,3,4-trisphosphate and participates in inositol phosphate metabolism. In Bos taurus (Bovine), this protein is Inositol polyphosphate 1-phosphatase.